The following is a 97-amino-acid chain: U6-theraphotoxin-Hhn1a 1 (97 aa).

Residues 1–33 (MLIKQFSRRSKNMKVQILLAFAALFVLAVGSYA) form the signal peptide. Positions 34-61 (SESKKLDLRDALFSAMFSADYQLNPQER) are excised as a propeptide. Intrachain disulfides connect Cys-63–Cys-77, Cys-70–Cys-82, and Cys-76–Cys-89.

It belongs to the neurotoxin 10 (Hwtx-1) family. 12 (Hntx-12) subfamily. In terms of tissue distribution, expressed by the venom gland.

Its subcellular location is the secreted. Ion channel inhibitor. The chain is U6-theraphotoxin-Hhn1a 1 from Cyriopagopus hainanus (Chinese bird spider).